A 368-amino-acid chain; its full sequence is Ferrochelatase (368 aa).

Residues His209 and Glu290 each contribute to the Fe cation site. The disordered stretch occupies residues 341-368 (ADLGGGREATGQAAERSRQRALALGAKQ).

It belongs to the ferrochelatase family.

It is found in the cytoplasm. It catalyses the reaction heme b + 2 H(+) = protoporphyrin IX + Fe(2+). The protein operates within porphyrin-containing compound metabolism; protoheme biosynthesis; protoheme from protoporphyrin-IX: step 1/1. Functionally, catalyzes the ferrous insertion into protoporphyrin IX. The sequence is that of Ferrochelatase from Nitrosococcus oceani (strain ATCC 19707 / BCRC 17464 / JCM 30415 / NCIMB 11848 / C-107).